The sequence spans 535 residues: Transmembrane protein 151 homolog (535 aa).

3 helical membrane-spanning segments follow: residues 27 to 47, 73 to 93, and 254 to 274; these read GYGK…YATY, YNFV…MECW, and PWFL…SWPL. Residues 498-535 form a disordered region; that stretch reads ASISHSSSKDLKSLTLKNNNGAANNNNNNNNENPEEQP. The span at 510–529 shows a compositional bias: low complexity; sequence SLTLKNNNGAANNNNNNNNE.

The protein belongs to the TMEM151 family.

It localises to the membrane. The protein is Transmembrane protein 151 homolog of Caenorhabditis briggsae.